Here is a 304-residue protein sequence, read N- to C-terminus: Bifunctional protein FolD (304 aa).

NADP(+)-binding positions include 170–172, Ser-195, and Ile-236; that span reads GRS.

Belongs to the tetrahydrofolate dehydrogenase/cyclohydrolase family. Homodimer.

The catalysed reaction is (6R)-5,10-methylene-5,6,7,8-tetrahydrofolate + NADP(+) = (6R)-5,10-methenyltetrahydrofolate + NADPH. It carries out the reaction (6R)-5,10-methenyltetrahydrofolate + H2O = (6R)-10-formyltetrahydrofolate + H(+). The protein operates within one-carbon metabolism; tetrahydrofolate interconversion. Catalyzes the oxidation of 5,10-methylenetetrahydrofolate to 5,10-methenyltetrahydrofolate and then the hydrolysis of 5,10-methenyltetrahydrofolate to 10-formyltetrahydrofolate. The sequence is that of Bifunctional protein FolD from Anaplasma phagocytophilum (strain HZ).